A 271-amino-acid polypeptide reads, in one-letter code: Putative pyruvate, phosphate dikinase regulatory protein 2 (271 aa).

151–158 serves as a coordination point for ADP; that stretch reads GVSRTSKT.

It belongs to the pyruvate, phosphate/water dikinase regulatory protein family. PDRP subfamily.

It carries out the reaction N(tele)-phospho-L-histidyl/L-threonyl-[pyruvate, phosphate dikinase] + ADP = N(tele)-phospho-L-histidyl/O-phospho-L-threonyl-[pyruvate, phosphate dikinase] + AMP + H(+). The enzyme catalyses N(tele)-phospho-L-histidyl/O-phospho-L-threonyl-[pyruvate, phosphate dikinase] + phosphate + H(+) = N(tele)-phospho-L-histidyl/L-threonyl-[pyruvate, phosphate dikinase] + diphosphate. Functionally, bifunctional serine/threonine kinase and phosphorylase involved in the regulation of the pyruvate, phosphate dikinase (PPDK) by catalyzing its phosphorylation/dephosphorylation. The sequence is that of Putative pyruvate, phosphate dikinase regulatory protein 2 from Staphylococcus haemolyticus (strain JCSC1435).